The primary structure comprises 1038 residues: Bone morphogenetic protein receptor type-2 (1038 aa).

The first 26 residues, 1-26 (MTSSLQRPWRVPWLPWTILLVSTAAA), serve as a signal peptide directing secretion. Residues 27–150 (SQNQERLCAF…PPHSFNRDET (124 aa)) lie on the Extracellular side of the membrane. Intrachain disulfides connect cysteine 34–cysteine 66, cysteine 60–cysteine 84, cysteine 94–cysteine 117, cysteine 99–cysteine 116, and cysteine 118–cysteine 123. Asparagine 55 is a glycosylation site (N-linked (GlcNAc...) asparagine). An N-linked (GlcNAc...) asparagine glycan is attached at asparagine 110. Asparagine 126 is a glycosylation site (N-linked (GlcNAc...) asparagine). Residues 151-171 (IIIALASVSVLAVLIVALCFG) traverse the membrane as a helical segment. At 172–1038 (YRMLTGDRKQ…VSKDIGMNCL (867 aa)) the chain is on the cytoplasmic side. The Protein kinase domain maps to 203-504 (LKLLELIGRG…QCAEERMAEL (302 aa)). Residues 209-217 (IGRGRYGAV), lysine 230, and 280-282 (EYY) each bind ATP. Aspartate 333 serves as the catalytic Proton acceptor. ATP contacts are provided by residues 337 to 338 (RN) and aspartate 351. Residue threonine 379 is modified to Phosphothreonine. Serine 586 carries the phosphoserine modification. The tract at residues 593-626 (QAQARIPSPETSVTSLSTNTTTTNTTGLTPSTGM) is disordered. A compositionally biased stretch (low complexity) spans 603 to 626 (TSVTSLSTNTTTTNTTGLTPSTGM). Phosphoserine occurs at positions 680 and 681. Disordered stretches follow at residues 746 to 770 (PKQQ…KEPR) and 872 to 972 (RREQ…EKIK). A compositionally biased stretch (basic and acidic residues) spans 872-896 (RREQQAGHDEGVLDRLVDRRERPLE). The segment covering 937–964 (RPNSLDLSATNVLDGSSIQIGESTQDGK) has biased composition (polar residues).

It belongs to the protein kinase superfamily. TKL Ser/Thr protein kinase family. TGFB receptor subfamily. Interacts with GDF5. Interacts with BMP4. Interacts with SCUBE3. Interacts with TSC22D1/TSC-22. Interacts with activin A/INHBA. Mg(2+) serves as cofactor. Requires Mn(2+) as cofactor. In terms of tissue distribution, highly expressed in heart and liver.

It localises to the cell membrane. It carries out the reaction L-threonyl-[receptor-protein] + ATP = O-phospho-L-threonyl-[receptor-protein] + ADP + H(+). The catalysed reaction is L-seryl-[receptor-protein] + ATP = O-phospho-L-seryl-[receptor-protein] + ADP + H(+). Functionally, on ligand binding, forms a receptor complex consisting of two type II and two type I transmembrane serine/threonine kinases. Type II receptors phosphorylate and activate type I receptors which autophosphorylate, then bind and activate SMAD transcriptional regulators. Can also mediate signaling through the activation of the p38MAPK cascade. Binds to BMP7, BMP2 and, less efficiently, BMP4. Binding is weak but enhanced by the presence of type I receptors for BMPs. Mediates induction of adipogenesis by GDF6. Promotes signaling also by binding to activin A/INHBA. The protein is Bone morphogenetic protein receptor type-2 (BMPR2) of Homo sapiens (Human).